Reading from the N-terminus, the 59-residue chain is MAKTIKVTQIRSSIGRLPKHKATLVGLGLRRIGHTVEREDTPAIRGMINLVSYMVKVEE.

The protein belongs to the universal ribosomal protein uL30 family. Part of the 50S ribosomal subunit.

The protein is Large ribosomal subunit protein uL30 of Photorhabdus laumondii subsp. laumondii (strain DSM 15139 / CIP 105565 / TT01) (Photorhabdus luminescens subsp. laumondii).